We begin with the raw amino-acid sequence, 332 residues long: NADH-quinone oxidoreductase subunit H (332 aa).

The next 9 helical transmembrane spans lie at 4 to 24 (FAFFALEALIKCIIIIAIFAS), 44 to 64 (IGPDMVGPFGLIQLVADMIKL), 78 to 98 (FIFAIAPLISAICAFVSLAAI), 120 to 140 (VALLFVIGTSGLCFYAVFLGG), 165 to 185 (VGALALIAIVMLVGSFSLVDI), 194 to 214 (FSWLIFKQPLAFVLFIIALFI), 255 to 275 (IAGAILVTLLFLGGFNGFWII), 279 to 299 (IMMIVKSSFIFFWYFWARAAF), and 312 to 332 (YLILIPLAVVNLLITALAVLL).

Belongs to the complex I subunit 1 family. In terms of assembly, NDH-1 is composed of 14 different subunits. Subunits NuoA, H, J, K, L, M, N constitute the membrane sector of the complex.

It is found in the cell inner membrane. The catalysed reaction is a quinone + NADH + 5 H(+)(in) = a quinol + NAD(+) + 4 H(+)(out). Functionally, NDH-1 shuttles electrons from NADH, via FMN and iron-sulfur (Fe-S) centers, to quinones in the respiratory chain. The immediate electron acceptor for the enzyme in this species is believed to be ubiquinone. Couples the redox reaction to proton translocation (for every two electrons transferred, four hydrogen ions are translocated across the cytoplasmic membrane), and thus conserves the redox energy in a proton gradient. This subunit may bind ubiquinone. The polypeptide is NADH-quinone oxidoreductase subunit H (Campylobacter jejuni subsp. doylei (strain ATCC BAA-1458 / RM4099 / 269.97)).